We begin with the raw amino-acid sequence, 642 residues long: Sec1 family domain-containing protein 1 (642 aa).

An N-acetylalanine modification is found at alanine 2. Residues serine 37, serine 303, and serine 528 each carry the phosphoserine modification.

It belongs to the STXBP/unc-18/SEC1 family. As to quaternary structure, interacts with STX17. Interacts with STX5A. Interacts with the COG complex via COG4.

It is found in the cytoplasm. Its subcellular location is the endoplasmic reticulum membrane. It localises to the golgi apparatus. The protein resides in the golgi stack membrane. Functionally, plays a role in SNARE-pin assembly and Golgi-to-ER retrograde transport via its interaction with COG4. Involved in vesicular transport between the endoplasmic reticulum and the Golgi. This chain is Sec1 family domain-containing protein 1 (SCFD1), found in Homo sapiens (Human).